The sequence spans 104 residues: NADH-quinone oxidoreductase subunit K (104 aa).

The next 3 helical transmembrane spans lie at 4–24, 28–48, and 64–84; these read VAYYLVLSAILFSIGVGAFLI, IITIFMSIELMLNAVNLSFVA, and IFVFFVMVVAAAEAAVGLAII.

Belongs to the complex I subunit 4L family. As to quaternary structure, NDH-1 is composed of 14 different subunits. Subunits NuoA, H, J, K, L, M, N constitute the membrane sector of the complex.

The protein resides in the cell inner membrane. The catalysed reaction is a quinone + NADH + 5 H(+)(in) = a quinol + NAD(+) + 4 H(+)(out). In terms of biological role, NDH-1 shuttles electrons from NADH, via FMN and iron-sulfur (Fe-S) centers, to quinones in the respiratory chain. The immediate electron acceptor for the enzyme in this species is believed to be ubiquinone. Couples the redox reaction to proton translocation (for every two electrons transferred, four hydrogen ions are translocated across the cytoplasmic membrane), and thus conserves the redox energy in a proton gradient. This is NADH-quinone oxidoreductase subunit K from Acidobacterium capsulatum (strain ATCC 51196 / DSM 11244 / BCRC 80197 / JCM 7670 / NBRC 15755 / NCIMB 13165 / 161).